We begin with the raw amino-acid sequence, 1638 residues long: Ciliary rootlet coiled-coil protein 2 (1638 aa).

Residues 1–20 are compositionally biased toward polar residues; the sequence is MSSTSSNPDDGDTTEQSQLG. Disordered stretches follow at residues 1–21, 39–92, 396–423, and 1168–1213; these read MSST…QLGL, REDR…REES, ARLR…TSLH, and TRRK…NLQE. The span at 67 to 82 shows a compositional bias: low complexity; the sequence is SSSLGEEPLSGLREPP. The stretch at 85 to 144 forms a coiled coil; that stretch reads TSHAREESELLQEELTRLEDLLAQADAEREELASRCHMVSQRLQARLDTTEARLRKSELE. Residues 406 to 421 are compositionally biased toward polar residues; that stretch reads SPHQRMSPARTSSPTS. 2 coiled-coil regions span residues 426-1234 and 1281-1315; these read LQAV…VQKE and LQEA…AEGA. Residues 1180–1193 are compositionally biased toward basic and acidic residues; the sequence is RTLEAENQRKRQEV. 2 disordered regions span residues 1338 to 1383 and 1506 to 1551; these read RNLL…VPVD and ALEE…QTTS. Positions 1349-1371 are enriched in polar residues; the sequence is SPTTGSSQTRPGRQRTSPPTRSY. Coiled-coil stretches lie at residues 1412–1506 and 1542–1576; these read RDNS…LRQA and RRAL…TEQE.

This sequence belongs to the rootletin family.

This chain is Ciliary rootlet coiled-coil protein 2, found in Mus musculus (Mouse).